We begin with the raw amino-acid sequence, 546 residues long: MFS-type transporter GME11371 (546 aa).

7 consecutive transmembrane segments (helical) span residues 39 to 59 (LTYL…DLTI), 77 to 96 (IGWY…SSWG), 107 to 127 (MFLL…AAPT), 137 to 157 (ITGI…AFAV), 167 to 187 (GGLA…GGVL), 195 to 215 (WCFY…FLFF), and 240 to 260 (FPGF…LLWG). Asparagine 267 is a glycosylation site (N-linked (GlcNAc...) asparagine). 7 consecutive transmembrane segments (helical) span residues 270–290 (DVIG…VVEW), 307–327 (VVLF…VLVY), 349–369 (LPYI…ISAT), 370–390 (GYFT…AGLI), 402–422 (WIGY…PPIL), 433–453 (VAAT…FMVS), and 509–529 (ISFA…IFMP).

It belongs to the major facilitator superfamily.

The protein localises to the cell membrane. It participates in secondary metabolite biosynthesis. Functionally, MFS-type transporter; part of the gene cluster that mediates the biosynthesis of dibenzodioxocinones such as pestalotiollide B, a novel class of inhibitors against cholesterol ester transfer protein (CEPT). essential for dibenzodioxocinones biosynthesis and may be involved in the secretion of the cluster products. This chain is MFS-type transporter GME11371, found in Pestalotiopsis microspora.